A 158-amino-acid polypeptide reads, in one-letter code: Transcriptional repressor NrdR (158 aa).

Residues 3–34 (CPSCQNTDSRVLESRAADAGRSVRRRRECLHC) fold into a zinc finger. The region spanning 49–139 (ITVLKRNGNR…VYRHFRGIND (91 aa)) is the ATP-cone domain.

This sequence belongs to the NrdR family. Zn(2+) is required as a cofactor.

In terms of biological role, negatively regulates transcription of bacterial ribonucleotide reductase nrd genes and operons by binding to NrdR-boxes. This Prochlorococcus marinus (strain MIT 9303) protein is Transcriptional repressor NrdR.